The chain runs to 213 residues: Orotate phosphoribosyltransferase (213 aa).

Lys26 is a binding site for 5-phospho-alpha-D-ribose 1-diphosphate. 34–35 (FF) is an orotate binding site. Residues 72–73 (YK), Arg99, Lys100, Lys103, His105, and 124–132 (DDVITAGTA) each bind 5-phospho-alpha-D-ribose 1-diphosphate. Orotate is bound by residues Thr128 and Arg156.

Belongs to the purine/pyrimidine phosphoribosyltransferase family. PyrE subfamily. In terms of assembly, homodimer. Mg(2+) is required as a cofactor.

It carries out the reaction orotidine 5'-phosphate + diphosphate = orotate + 5-phospho-alpha-D-ribose 1-diphosphate. Its pathway is pyrimidine metabolism; UMP biosynthesis via de novo pathway; UMP from orotate: step 1/2. Catalyzes the transfer of a ribosyl phosphate group from 5-phosphoribose 1-diphosphate to orotate, leading to the formation of orotidine monophosphate (OMP). The polypeptide is Orotate phosphoribosyltransferase (Vibrio vulnificus (strain YJ016)).